Reading from the N-terminus, the 327-residue chain is Ran-specific GTPase-activating protein 2 (327 aa).

Disordered regions lie at residues Met-1–Asp-96 and Gly-109–Val-205. Residues Pro-24–Thr-83 are compositionally biased toward basic and acidic residues. At Thr-31 the chain carries Phosphothreonine. The segment covering Ala-122–Asp-133 has biased composition (polar residues). Residues Phe-140–Phe-152 show a composition bias toward low complexity. Basic and acidic residues-rich tracts occupy residues Asn-157–Ser-179 and Glu-189–Val-205. Ser-179 is subject to Phosphoserine. The RanBD1 domain occupies Thr-191 to Lys-327.

In terms of assembly, interacts with GSP1, XPO1 and SRM1.

It is found in the nucleus. Important for the export of protein containing nuclear export signal (NES) out of the nucleus. Stimulates the GTPase activity of GSP1. The chain is Ran-specific GTPase-activating protein 2 (YRB2) from Saccharomyces cerevisiae (strain ATCC 204508 / S288c) (Baker's yeast).